A 374-amino-acid chain; its full sequence is Pectate lyase 3 (374 aa).

Positions 1–22 (MKYLLPSTAAGLLLLAAQPTMA) are cleaved as a signal peptide. A disulfide bond links Cys-93 and Cys-176. Residues Asp-150, Asp-152, Glu-187, and Asp-191 each contribute to the Ca(2+) site. Arg-239 is an active-site residue. Residues Cys-350 and Cys-373 are joined by a disulfide bond.

This sequence belongs to the polysaccharide lyase 1 family. PLADES subfamily. The cofactor is Ca(2+).

The protein resides in the secreted. The catalysed reaction is Eliminative cleavage of (1-&gt;4)-alpha-D-galacturonan to give oligosaccharides with 4-deoxy-alpha-D-galact-4-enuronosyl groups at their non-reducing ends.. It participates in glycan metabolism; pectin degradation; 2-dehydro-3-deoxy-D-gluconate from pectin: step 2/5. Involved in maceration and soft-rotting of plant tissue. This chain is Pectate lyase 3 (pel3), found in Pectobacterium atrosepticum (strain SCRI 1043 / ATCC BAA-672) (Erwinia carotovora subsp. atroseptica).